The chain runs to 235 residues: Aspartate/glutamate leucyltransferase (235 aa).

The protein belongs to the R-transferase family. Bpt subfamily.

Its subcellular location is the cytoplasm. It catalyses the reaction N-terminal L-glutamyl-[protein] + L-leucyl-tRNA(Leu) = N-terminal L-leucyl-L-glutamyl-[protein] + tRNA(Leu) + H(+). It carries out the reaction N-terminal L-aspartyl-[protein] + L-leucyl-tRNA(Leu) = N-terminal L-leucyl-L-aspartyl-[protein] + tRNA(Leu) + H(+). In terms of biological role, functions in the N-end rule pathway of protein degradation where it conjugates Leu from its aminoacyl-tRNA to the N-termini of proteins containing an N-terminal aspartate or glutamate. The sequence is that of Aspartate/glutamate leucyltransferase from Pseudomonas putida (strain W619).